We begin with the raw amino-acid sequence, 175 residues long: Ribosome maturation factor RimM (175 aa).

Positions 103-175 (EGEYYWSDLI…LLTVDWDPDF (73 aa)) constitute a PRC barrel domain.

Belongs to the RimM family. Binds ribosomal protein uS19.

It is found in the cytoplasm. In terms of biological role, an accessory protein needed during the final step in the assembly of 30S ribosomal subunit, possibly for assembly of the head region. Essential for efficient processing of 16S rRNA. May be needed both before and after RbfA during the maturation of 16S rRNA. It has affinity for free ribosomal 30S subunits but not for 70S ribosomes. In Nitrosococcus oceani (strain ATCC 19707 / BCRC 17464 / JCM 30415 / NCIMB 11848 / C-107), this protein is Ribosome maturation factor RimM.